A 912-amino-acid polypeptide reads, in one-letter code: Serine/threonine-protein kinase D1 (912 aa).

The residue at position 95 (Y95) is a Phosphotyrosine. A Phorbol-ester/DAG-type 1 zinc finger spans residues 146 to 196 (PHALFVHSYRAPAFCDHCGEMLWGLVRQGLKCEGCGLNYHKRCAFKIPNNC). Phosphoserine occurs at positions 205, 208, 219, and 223. The segment at 270-320 (PHTFVIHSYTRPTVCQYCKKLLKGLFRQGLQCKDCRFNCHKRCAPKVPNNC) adopts a Phorbol-ester/DAG-type 2 zinc-finger fold. A Phosphoserine modification is found at S345. The interval 377-402 (NDSGEMQDPDPDHEDANRTISPSTSN) is disordered. Phosphoserine; by MAPK13 is present on residues S397 and S401. Positions 422–541 (TVMKEGWMVH…WEIAIQHALM (120 aa)) constitute a PH domain. Y432 carries the phosphotyrosine modification. S448 carries the post-translational modification Phosphoserine. Y463 bears the Phosphotyrosine; by ABL mark. S473 bears the Phosphoserine mark. At Y502 the chain carries Phosphotyrosine. Position 548 is a phosphoserine (S548). One can recognise a Protein kinase domain in the interval 583-839 (IFPDEVLGSG…VDKTLSHPWL (257 aa)). Residues 589-597 (LGSGQFGIV) and K612 contribute to the ATP site. Catalysis depends on D706, which acts as the Proton acceptor. The residue at position 738 (S738) is a Phosphoserine; by PKC/PRKCD. S742 bears the Phosphoserine; by autocatalysis and PKC/PRKCD mark. Y749 is modified (phosphotyrosine). Phosphoserine; by autocatalysis is present on S910.

The protein belongs to the protein kinase superfamily. CAMK Ser/Thr protein kinase family. PKD subfamily. Interacts (via N-terminus) with ADAP1/CENTA1. Interacts with MAPK13. Interacts with DAPK1 in an oxidative stress-regulated manner. Interacts with USP28; the interaction induces phosphorylation of USP28 and activated KRAS-mediated stabilization of ZNF304. Interacts with AKAP13 (via C-terminal domain). Requires Mg(2+) as cofactor. In terms of processing, phosphorylated at Ser-397 and Ser-401 by MAPK13 during regulation of insulin secretion in pancreatic beta cells. Phosphorylated by DAPK1. Phosphorylated at Tyr-95 and by ABL at Tyr-463, which primes the kinase in response to oxidative stress, and promotes a second step activating phosphorylation at Ser-738/Ser-742 by PKRD. Phosphorylated on Ser-910 upon S.enterica infection in macrophages.

The protein localises to the cytoplasm. The protein resides in the cell membrane. It localises to the golgi apparatus. Its subcellular location is the trans-Golgi network. The catalysed reaction is L-seryl-[protein] + ATP = O-phospho-L-seryl-[protein] + ADP + H(+). It catalyses the reaction L-threonyl-[protein] + ATP = O-phospho-L-threonyl-[protein] + ADP + H(+). Activated by DAG and phorbol esters. Phorbol-ester/DAG-type domain 1 binds DAG with high affinity and appears to play the dominant role in mediating translocation to the cell membrane and trans-Golgi network. Phorbol-ester/DAG-type domain 2 binds phorbol ester with higher affinity. Autophosphorylation of Ser-742 and phosphorylation of Ser-738 by PKC relieves auto-inhibition by the PH domain. Phosphorylation on Tyr-463 by the SRC-ABL1 pathway in response to oxidative stress, is also required for activation. Activated by DAPK1 under oxidative stress. In terms of biological role, serine/threonine-protein kinase that converts transient diacylglycerol (DAG) signals into prolonged physiological effects downstream of PKC, and is involved in the regulation of MAPK8/JNK1 and Ras signaling, Golgi membrane integrity and trafficking, cell survival through NF-kappa-B activation, cell migration, cell differentiation by mediating HDAC7 nuclear export, cell proliferation via MAPK1/3 (ERK1/2) signaling, and plays a role in cardiac hypertrophy, VEGFA-induced angiogenesis, genotoxic-induced apoptosis and flagellin-stimulated inflammatory response. Phosphorylates the epidermal growth factor receptor (EGFR) on dual threonine residues, which leads to the suppression of epidermal growth factor (EGF)-induced MAPK8/JNK1 activation and subsequent JUN phosphorylation. Phosphorylates RIN1, inducing RIN1 binding to 14-3-3 proteins YWHAB, YWHAE and YWHAZ and increased competition with RAF1 for binding to GTP-bound form of Ras proteins (NRAS, HRAS and KRAS). Acts downstream of the heterotrimeric G-protein beta/gamma-subunit complex to maintain the structural integrity of the Golgi membranes, and is required for protein transport along the secretory pathway. In the trans-Golgi network (TGN), regulates the fission of transport vesicles that are on their way to the plasma membrane. May act by activating the lipid kinase phosphatidylinositol 4-kinase beta (PI4KB) at the TGN for the local synthesis of phosphorylated inositol lipids, which induces a sequential production of DAG, phosphatidic acid (PA) and lyso-PA (LPA) that are necessary for membrane fission and generation of specific transport carriers to the cell surface. Under oxidative stress, is phosphorylated at Tyr-463 via SRC-ABL1 and contributes to cell survival by activating IKK complex and subsequent nuclear translocation and activation of NFKB1. Involved in cell migration by regulating integrin alpha-5/beta-3 recycling and promoting its recruitment in newly forming focal adhesion. In osteoblast differentiation, mediates the bone morphogenetic protein 2 (BMP2)-induced nuclear export of HDAC7, which results in the inhibition of HDAC7 transcriptional repression of RUNX2. In neurons, plays an important role in neuronal polarity by regulating the biogenesis of TGN-derived dendritic vesicles, and is involved in the maintenance of dendritic arborization and Golgi structure in hippocampal cells. May potentiate mitogenesis induced by the neuropeptide bombesin or vasopressin by mediating an increase in the duration of MAPK1/3 (ERK1/2) signaling, which leads to accumulation of immediate-early gene products including FOS that stimulate cell cycle progression. Plays an important role in the proliferative response induced by low calcium in keratinocytes, through sustained activation of MAPK1/3 (ERK1/2) pathway. Downstream of novel PKC signaling, plays a role in cardiac hypertrophy by phosphorylating HDAC5, which in turn triggers XPO1/CRM1-dependent nuclear export of HDAC5, MEF2A transcriptional activation and induction of downstream target genes that promote myocyte hypertrophy and pathological cardiac remodeling. Mediates cardiac troponin I (TNNI3) phosphorylation at the PKA sites, which results in reduced myofilament calcium sensitivity, and accelerated crossbridge cycling kinetics. The PRKD1-HDAC5 pathway is also involved in angiogenesis by mediating VEGFA-induced specific subset of gene expression, cell migration, and tube formation. In response to VEGFA, is necessary and required for HDAC7 phosphorylation which induces HDAC7 nuclear export and endothelial cell proliferation and migration. During apoptosis induced by cytarabine and other genotoxic agents, PRKD1 is cleaved by caspase-3 at Asp-378, resulting in activation of its kinase function and increased sensitivity of cells to the cytotoxic effects of genotoxic agents. In epithelial cells, is required for transducing flagellin-stimulated inflammatory responses by binding and phosphorylating TLR5, which contributes to MAPK14/p38 activation and production of inflammatory cytokines. Acts as an activator of NLRP3 inflammasome assembly by mediating phosphorylation of NLRP3. May play a role in inflammatory response by mediating activation of NF-kappa-B. May be involved in pain transmission by directly modulating TRPV1 receptor. Plays a role in activated KRAS-mediated stabilization of ZNF304 in colorectal cancer (CRC) cells. Regulates nuclear translocation of transcription factor TFEB in macrophages upon live S.enterica infection. The sequence is that of Serine/threonine-protein kinase D1 (PRKD1) from Homo sapiens (Human).